A 222-amino-acid polypeptide reads, in one-letter code: uncharacterized protein (222 aa).

7 helical membrane-spanning segments follow: residues 26–46, 48–68, 75–95, 107–127, 139–159, 166–186, and 198–218; these read YGLLALTLAFSGLVAYVSQQM, LPYPNVFVVLIGFYGLFFLTV, WGLVSTFALTGFMGYTLGPIL, VITSAFAMTALVFFGLSAYVL, FITAGFFVLLGAVLVSLFFQI, ISAGFVLFSSAMILYQTSAII, and ISLYVSIYNLFISLLQIFGIA.

Belongs to the BI1 family.

It is found in the cell membrane. This is an uncharacterized protein from Pseudomonas aeruginosa (strain ATCC 15692 / DSM 22644 / CIP 104116 / JCM 14847 / LMG 12228 / 1C / PRS 101 / PAO1).